Consider the following 261-residue polypeptide: F-actin-capping protein subunit alpha (261 aa).

It belongs to the F-actin-capping protein alpha subunit family. In terms of assembly, heterodimer of an alpha and a beta subunit.

In terms of biological role, F-actin-capping proteins bind in a Ca(2+)-independent manner to the fast growing ends of actin filaments (barbed end) thereby blocking the exchange of subunits at these ends. Unlike other capping proteins (such as gelsolin and severin), these proteins do not sever actin filaments. This chain is F-actin-capping protein subunit alpha (CAP1), found in Eremothecium gossypii (strain ATCC 10895 / CBS 109.51 / FGSC 9923 / NRRL Y-1056) (Yeast).